Reading from the N-terminus, the 97-residue chain is Small ribosomal subunit protein bS21 (97 aa).

Positions 37–97 (EKPSVRKARE…APASSPTTTA (61 aa)) are disordered. The span at 76-97 (RAVAPRRPAAAPAPASSPTTTA) shows a compositional bias: low complexity.

This sequence belongs to the bacterial ribosomal protein bS21 family.

This Methylobacterium sp. (strain 4-46) protein is Small ribosomal subunit protein bS21.